The chain runs to 271 residues: Phosphatidylglycerol--prolipoprotein diacylglyceryl transferase (271 aa).

A run of 3 helical transmembrane segments spans residues 17 to 37 (LAIHWYGLTYLAAFGLFFFLA), 63 to 83 (ILFLGVMGVVIGGRLGYCLFY), and 95 to 115 (IFAVWQGGMSFHGGMLGVLVS). Residue arginine 146 participates in a 1,2-diacyl-sn-glycero-3-phospho-(1'-sn-glycerol) binding. 3 helical membrane-spanning segments follow: residues 182 to 202 (SQVYQFLMEGLLLFVLLWLYA), 209 to 229 (GQVSGAFLVGYGVFRFIAEFF), and 243 to 263 (MSMGQWLCVPMIAAGIWLWIW).

This sequence belongs to the Lgt family.

It is found in the cell inner membrane. The catalysed reaction is L-cysteinyl-[prolipoprotein] + a 1,2-diacyl-sn-glycero-3-phospho-(1'-sn-glycerol) = an S-1,2-diacyl-sn-glyceryl-L-cysteinyl-[prolipoprotein] + sn-glycerol 1-phosphate + H(+). It functions in the pathway protein modification; lipoprotein biosynthesis (diacylglyceryl transfer). In terms of biological role, catalyzes the transfer of the diacylglyceryl group from phosphatidylglycerol to the sulfhydryl group of the N-terminal cysteine of a prolipoprotein, the first step in the formation of mature lipoproteins. In Polaromonas naphthalenivorans (strain CJ2), this protein is Phosphatidylglycerol--prolipoprotein diacylglyceryl transferase.